The following is a 188-amino-acid chain: Archaetidylinositol phosphate synthase (188 aa).

A run of 2 helical transmembrane segments spans residues 20–40 (LASL…ITLL) and 51–71 (ILAG…GALA). Mg(2+) contacts are provided by Asp64, Asp67, Asp85, and Asp89. Asp89 functions as the Proton acceptor in the catalytic mechanism. A run of 2 helical transmembrane segments spans residues 96–116 (ILFG…LTLI) and 147–167 (IIII…YLVA).

It belongs to the CDP-alcohol phosphatidyltransferase class-I family. Requires Mn(2+) as cofactor. The cofactor is Mg(2+).

The protein localises to the cell membrane. It catalyses the reaction CDP-2,3-bis-O-(phytanyl)-sn-glycerol + 1D-myo-inositol 3-phosphate = saturated 1-archaetidyl-1D-myo-inositol 3-phosphate + CMP + H(+). The protein operates within lipid metabolism; phospholipid metabolism. In terms of biological role, catalyzes the formation of archaetidylinositol phosphate (AIP) from CDP-archaeol (CDP-ArOH or CDP-2,3-bis-(O-phytanyl)-sn-glycerol) and 1L-myo-inositol 1-phosphate (IP or 1D-myo-inositol 3-phosphate). AIP is a precursor of archaetidyl-myo-inositol (AI), an ether-type inositol phospholipid ubiquitously distributed in archaea membranes and essential for glycolipid biosynthesis in archaea. This is Archaetidylinositol phosphate synthase from Pyrococcus horikoshii (strain ATCC 700860 / DSM 12428 / JCM 9974 / NBRC 100139 / OT-3).